The chain runs to 245 residues: Interleukin-1 receptor-associated kinase 1-binding protein 1 homolog (245 aa).

This sequence belongs to the IRAK1BP1 family.

The protein localises to the cytoplasm. It localises to the nucleus. May be part of a signaling pathway that leads to NF-kappa-B activation. This is Interleukin-1 receptor-associated kinase 1-binding protein 1 homolog (irak1bp1) from Xenopus laevis (African clawed frog).